A 203-amino-acid chain; its full sequence is Thymidylate kinase (203 aa).

14 to 21 (GGEGIGKS) lines the ATP pocket.

Belongs to the thymidylate kinase family.

The catalysed reaction is dTMP + ATP = dTDP + ADP. Its function is as follows. Phosphorylation of dTMP to form dTDP in both de novo and salvage pathways of dTTP synthesis. This Rickettsia conorii (strain ATCC VR-613 / Malish 7) protein is Thymidylate kinase.